We begin with the raw amino-acid sequence, 1393 residues long: MEKQRREESSFQQPPWIPQTPMKPFSPICPYTVEDQYHSSQLEERRFVGNKDMSGLDHLSFGDLLALANTASLIFSGQTPIPTRNTEVMQKGTEEVESLSSVSNNVAEQILKTPEKPKRKKHRPKVRREAKPKREPKPRAPRKSVVTDGQESKTPKRKYVRKKVEVSKDQDATPVESSAAVETSTRPKRLCRRVLDFEAENGENQTNGDIREAGEMESALQEKQLDSGNQELKDCLLSAPSTPKRKRSQGKRKGVQPKKNGSNLEEVDISMAQAAKRRQGPTCCDMNLSGIQYDEQCDYQKMHWLYSPNLQQGGMRYDAICSKVFSGQQHNYVSAFHATCYSSTSQLSANRVLTVEERREGIFQGRQESELNVLSDKIDTPIKKKTTGHARFRNLSSMNKLVEVPEHLTSGYCSKPQQNNKILVDTRVTVSKKKPTKSEKSQTKQKNLLPNLCRFPPSFTGLSPDELWKRRNSIETISELLRLLDINREHSETALVPYTMNSQIVLFGGGAGAIVPVTPVKKPRPRPKVDLDDETDRVWKLLLENINSEGVDGSDEQKAKWWEEERNVFRGRADSFIARMHLVQGDRRFTPWKGSVVDSVVGVFLTQNVSDHLSSSAFMSLASQFPVPFVPSSNFDAGTSSMPSIQITYLDSEETMSSPPDHNHSSVTLKNTQPDEEKDYVPSNETSRSSSEIAISAHESVDKTTDSKEYVDSDRKGSSVEVDKTDEKCRVLNLFPSEDSALTCQHSMVSDAPQNTERAGSSSEIDLEGEYRTSFMKLLQGVQVSLEDSNQVSPNMSPGDCSSEIKGFQSMKEPTKSSVDSSEPGCCSQQDGDVLSCQKPTLKEKGKKVLKEEKKAFDWDCLRREAQARAGIREKTRSTMDTVDWKAIRAADVKEVAETIKSRGMNHKLAERIQGFLDRLVNDHGSIDLEWLRDVPPDKAKEYLLSFNGLGLKSVECVRLLTLHHLAFPVDTNVGRIAVRLGWVPLQPLPESLQLHLLEMYPMLESIQKYLWPRLCKLDQKTLYELHYQMITFGKVFCTKSKPNCNACPMKGECRHFASAFASARLALPSTEKGMGTPDKNPLPLHLPEPFQREQGSEVVQHSEPAKKVTCCEPIIEEPASPEPETAEVSIADIEEAFFEDPEEIPTIRLNMDAFTSNLKKIMEHNKELQDGNMSSALVALTAETASLPMPKLKNISQLRTEHRVYELPDEHPLLAQLEKREPDDPCSYLLAIWTPGETADSIQPSVSTCIFQANGMLCDEETCFSCNSIKETRSQIVRGTILIPCRTAMRGSFPLNGTYFQVNEVFADHASSLNPINVPRELIWELPRRTVYFGTSVPTIFKGLSTEKIQACFWKGYVCVRGFDRKTRGPKPLIARLHFPASKLKGQQANLA.

Disordered stretches follow at residues 1 to 25 (MEKQ…MKPF), 98 to 186 (SLSS…TSTR), and 237 to 265 (LSAP…SNLE). The segment covering 98–108 (SLSSVSNNVAE) has biased composition (low complexity). Residues 117 to 126 (PKRKKHRPKV) show a composition bias toward basic residues. Basic and acidic residues-rich tracts occupy residues 127 to 138 (RREAKPKREPKP) and 162 to 171 (KKVEVSKDQD). The segment covering 243–256 (PKRKRSQGKRKGVQ) has biased composition (basic residues). Residues 528 to 626 (KVDLDDETDR…AFMSLASQFP (99 aa)) form a DEMETER region. Residues 653-672 (EETMSSPPDHNHSSVTLKNT) show a composition bias toward polar residues. 2 disordered regions span residues 653 to 722 (EETM…SVEV) and 789 to 830 (SNQV…CSQQ). Low complexity predominate over residues 687–698 (SRSSSEIAISAH). Over residues 699–722 (ESVDKTTDSKEYVDSDRKGSSVEV) the composition is skewed to basic and acidic residues. Residues 816–830 (KSSVDSSEPGCCSQQ) are compositionally biased toward polar residues. Lys901 participates in a covalent cross-link: Glycyl lysine isopeptide (Lys-Gly) (interchain with G-Cter in ubiquitin). [4Fe-4S] cluster is bound by residues Cys1038, Cys1045, Cys1048, and Cys1054.

Belongs to the DNA glycosylase family. DEMETER subfamily. In terms of assembly, interacts (via the central region) with ZDP. Binds to RPA2A. Interacts with XRCC1. Interacts probably with a complex made of MBD7, IDM1, IDM2 and IDM3. Interacts with APE1L. The cofactor is [4Fe-4S] cluster. Expressed ubiquitously in both vegetative and reproductive organs.

Its subcellular location is the nucleus. It is found in the nucleolus. The enzyme catalyses 2'-deoxyribonucleotide-(2'-deoxyribose 5'-phosphate)-2'-deoxyribonucleotide-DNA = a 3'-end 2'-deoxyribonucleotide-(2,3-dehydro-2,3-deoxyribose 5'-phosphate)-DNA + a 5'-end 5'-phospho-2'-deoxyribonucleoside-DNA + H(+). Its activity is regulated as follows. Stimulated by ZDP. Stimulated by XRCC1. Its function is as follows. Bifunctional DNA glycosylase/lyase, which excises 5-methylcytosine (5-meC) and 5-hydroxymethylcytosine (5-hmeC), leaving an apyrimidinic (AP) site that is subsequently incised by the lyase activity. Generates 3'-phosphor-alpha,beta-unsaturated aldehyde (3'-PUA) as a primary 5-meC excision intermediate. Prevents DNA hypermethylation, specifically in the promoter of otherwise silenced loci. May be involved in DNA repair through its nicking activity on methylated DNA. Binds with similar affinity to both methylated and non-methylated DNA. Highly distributive behavior on DNA substrates containing multiple 5-meC residues. Involved with Pol IV in the remodeling of the 5S rDNA chromatin via DNA methylation modifications during the first days of development post-germination. Participates in UV-B induced- and oxidative DNA damage repair. The chain is DNA glycosylase/AP lyase ROS1 from Arabidopsis thaliana (Mouse-ear cress).